Here is a 481-residue protein sequence, read N- to C-terminus: Regulator of G-protein signaling 1 (481 aa).

The disordered stretch occupies residues 1–31 (MPALHNPSSPPPSYEAVTSYRNGNSIDSGDK). The interval 33-227 (QQCSRLMKIT…SVHEIGKSKN (195 aa)) is fungal-DR. Positions 232 to 312 (PVYSVSSPSP…KGVSYFLTGK (81 aa)) constitute a DEP domain. Residues 344 to 474 (ILETILRKPN…AGDSLLKFLE (131 aa)) form the RGS domain.

The protein resides in the nucleus. It localises to the cytoplasm. In terms of biological role, negatively regulates pheromone signaling during mating. Acts in a negative feedback loop that is essential for the mating process. This loop acts to down-regulate cellular sensitivity to pheromone. Activated by ste11. This chain is Regulator of G-protein signaling 1 (rgs1), found in Schizosaccharomyces pombe (strain 972 / ATCC 24843) (Fission yeast).